Here is a 328-residue protein sequence, read N- to C-terminus: MSGLFETLGRRALFAFDAEQAHGLSIAGLKTGLVTGSAPNDLALSVKVAGLQFPNPLGMAAGYDKNAEVPDALLKLGFGFTEIGTITPRPQSGNPRPRIFRLVDDKAVINRLGFNNEGHDAAFKRLSQRAGKSGIVGVNIGANKDAEDRIADYVAGIRRFYQLARYFTVNISSPNTPGLRNLQARDSLRELLSRVLEARNEEGKMCTLKRPVFLKIAPDLANEELDDIAAEATEQKLDGIIISNTTLSRAGLKSAGGRDETGGLSGAPLFDRSTIVLARMRERVGPDMPLIGVGGVDSAETALTKVKAGARSRPALYGPDLSRPEPAY.

The helical transmembrane segment at 21–38 (AHGLSIAGLKTGLVTGSA) threads the bilayer. Residues 61 to 65 (AGYDK) and T85 contribute to the FMN site. K65 contributes to the substrate binding site. A substrate-binding site is contributed by 110–114 (NRLGF). N139 and N170 together coordinate FMN. Substrate is bound at residue 170–175 (NISSPN). Residue S173 is the Nucleophile of the active site. 2 residues coordinate FMN: K215 and S243. 244–245 (NT) is a substrate binding site. Residues G266 and G295 each contribute to the FMN site.

The protein belongs to the dihydroorotate dehydrogenase family. Type 2 subfamily. FMN serves as cofactor.

Its subcellular location is the mitochondrion inner membrane. The catalysed reaction is (S)-dihydroorotate + a quinone = orotate + a quinol. It functions in the pathway pyrimidine metabolism; UMP biosynthesis via de novo pathway; orotate from (S)-dihydroorotate (quinone route): step 1/1. Catalyzes the conversion of dihydroorotate to orotate with quinone as electron acceptor. This is Dihydroorotate dehydrogenase (quinone), mitochondrial (URA1) from Cyclocybe aegerita (Black poplar mushroom).